Here is a 624-residue protein sequence, read N- to C-terminus: Laccase-1 (624 aa).

Positions 1–20 (MRGLAKLFFLSCSFVSLVSS) are cleaved as a signal peptide. Plastocyanin-like domains follow at residues 72 to 183 (FASP…HSPN) and 195 to 343 (DRIV…CMFG). Residues His-117 and His-119 each coordinate Cu cation. Cys-138 and Cys-578 are oxidised to a cystine. Asn-149 is a glycosylation site (N-linked (GlcNAc...) asparagine). His-162 and His-164 together coordinate Cu cation. 2 N-linked (GlcNAc...) asparagine glycosylation sites follow: Asn-242 and Asn-430. Residues 469-562 (IIINNLDTVI…GKLAVIVVQP (94 aa)) form the Plastocyanin-like 3 domain. Cu cation is bound by residues His-480, His-483, and His-485. A glycan (N-linked (GlcNAc...) asparagine) is linked at Asn-503. The Cu cation site is built by His-543, Cys-544, His-545, and His-549. The tract at residues 579-604 (ANTDPNAFGPAKRSSSPSIQSSKTSS) is disordered. Positions 592 to 604 (SSSPSIQSSKTSS) are enriched in low complexity.

The protein belongs to the multicopper oxidase family. Cu cation is required as a cofactor.

The protein resides in the secreted. It localises to the cell wall. It carries out the reaction 4 hydroquinone + O2 = 4 benzosemiquinone + 2 H2O. In terms of biological role, laccase that catalyzes the oxidation of certain aromatic compounds, including L-dopa, to quinones, which then polymerize to melanin. Able to oxidize a wide variety of aromatic diphenol and diamino groups in the ortho, meta, and para positions but not monophenolic groups such as in phenol, tyramine, or tyrosine. Plays an important role in virulence. Plays a role in dissemination to extrapulmonary sites but is not involved in pulmonary growth or in elicitation of cellular immune responses in the lung. The protein is Laccase-1 of Cryptococcus neoformans var. neoformans serotype D (strain B-3501A) (Filobasidiella neoformans).